We begin with the raw amino-acid sequence, 665 residues long: DNA ligase (665 aa).

NAD(+) contacts are provided by residues Asp-34 to Asp-38, Ser-83 to Leu-84, and Glu-114. Lys-116 serves as the catalytic N6-AMP-lysine intermediate. Positions 137, 171, 287, and 311 each coordinate NAD(+). Residues Cys-405, Cys-408, Cys-424, and Cys-429 each coordinate Zn(2+). Positions Lys-587–Asp-665 constitute a BRCT domain.

The protein belongs to the NAD-dependent DNA ligase family. LigA subfamily. Mg(2+) is required as a cofactor. Requires Mn(2+) as cofactor.

The enzyme catalyses NAD(+) + (deoxyribonucleotide)n-3'-hydroxyl + 5'-phospho-(deoxyribonucleotide)m = (deoxyribonucleotide)n+m + AMP + beta-nicotinamide D-nucleotide.. Functionally, DNA ligase that catalyzes the formation of phosphodiester linkages between 5'-phosphoryl and 3'-hydroxyl groups in double-stranded DNA using NAD as a coenzyme and as the energy source for the reaction. It is essential for DNA replication and repair of damaged DNA. This chain is DNA ligase, found in Thermosipho africanus (strain TCF52B).